The chain runs to 159 residues: Large ribosomal subunit protein uL15 (159 aa).

The segment covering 1-13 (MRIHEVTPKEGST) has biased composition (basic and acidic residues). Residues 1–51 (MRIHEVTPKEGSTKRRRRVGRGISAGQGASCGFGMRGQKSRSGTGTKAGFE) form a disordered region. A compositionally biased stretch (gly residues) spans 23-35 (ISAGQGASCGFGM).

Belongs to the universal ribosomal protein uL15 family. As to quaternary structure, part of the 50S ribosomal subunit.

Its function is as follows. Binds to the 23S rRNA. The chain is Large ribosomal subunit protein uL15 from Rippkaea orientalis (strain PCC 8801 / RF-1) (Cyanothece sp. (strain PCC 8801)).